The primary structure comprises 283 residues: 5'-nucleotidase SurE (283 aa).

A divalent metal cation-binding residues include D14, D15, S47, and N105.

The protein belongs to the SurE nucleotidase family. The cofactor is a divalent metal cation.

Its subcellular location is the cytoplasm. It carries out the reaction a ribonucleoside 5'-phosphate + H2O = a ribonucleoside + phosphate. Nucleotidase that shows phosphatase activity on nucleoside 5'-monophosphates. This chain is 5'-nucleotidase SurE, found in Chlamydia trachomatis serovar D (strain ATCC VR-885 / DSM 19411 / UW-3/Cx).